The primary structure comprises 498 residues: Glutamate--tRNA ligase (498 aa).

The short motif at Pro-11–Asn-21 is the 'HIGH' region element. A 'KMSKS' region motif is present at residues Lys-260 to Arg-264. Lys-263 lines the ATP pocket.

Belongs to the class-I aminoacyl-tRNA synthetase family. Glutamate--tRNA ligase type 1 subfamily. As to quaternary structure, monomer.

The protein localises to the cytoplasm. It carries out the reaction tRNA(Glu) + L-glutamate + ATP = L-glutamyl-tRNA(Glu) + AMP + diphosphate. Functionally, catalyzes the attachment of glutamate to tRNA(Glu) in a two-step reaction: glutamate is first activated by ATP to form Glu-AMP and then transferred to the acceptor end of tRNA(Glu). This chain is Glutamate--tRNA ligase, found in Leuconostoc mesenteroides subsp. mesenteroides (strain ATCC 8293 / DSM 20343 / BCRC 11652 / CCM 1803 / JCM 6124 / NCDO 523 / NBRC 100496 / NCIMB 8023 / NCTC 12954 / NRRL B-1118 / 37Y).